We begin with the raw amino-acid sequence, 588 residues long: Myc box-dependent-interacting protein 1 (588 aa).

Ala2 is modified (N-acetylalanine). The segment at 2-122 (AEMGSKGVTA…DYHQKLVDQA (121 aa)) is interaction with BIN2. Coiled-coil stretches lie at residues 15–42 (ASNV…TKDE) and 193–274 (HLVA…EKQH). Residues 29 to 276 (VLQKLGKADE…LVSLEKQHGS (248 aa)) form the BAR domain. Residues 279-355 (FTVKAQPSDS…PKHTPSKEMK (77 aa)) form a disordered region. Residues Ser296, Ser298, and Ser304 each carry the phosphoserine modification. A Phosphothreonine modification is found at Thr308. Residues Ser324 and Ser332 each carry the phosphoserine modification. The segment at 379 to 422 (FEAPGPFSEQASLLDLDFEPLPPVASPVKAPTPSGQSIPWDLWE) is clathrin-binding. Residues 448 to 483 (PSQTAEPGPAQPAEASEVVGGTQEPGETAASEATSS) form a disordered region. Positions 474 to 483 (ETAASEATSS) are enriched in low complexity. The SH3 domain maps to 515 to 588 (GFMFKVQAQH…FPENFTERVQ (74 aa)).

Heterodimer with AMPH. Binds SH3GLB1. Interacts (via SH3 domain) with DNM1. Interacts with SYNJ1. Interacts (via SH3 domain) with DNM2. Interacts with CLTC. Interacts with AP2A2. Interacts with AP2B1. Interacts with MYC (via N-terminal transactivation domain); the interaction requires the integrity of the conserved MYC box regions 1 and 2. Interacts with BIN2. Interacts with SNX4. Interacts (via BAR domain) with BACE1. Binds (via BAR domain) F-actin. Phosphorylated by protein kinase C. In terms of tissue distribution, highly expressed in the brain and muscle. Isoform AMPH2-1 is expressed only in the brain where it is concentrated in axon initial segments and nodes of Ranvier. Isoform AMPH2-2 is widely expressed.

The protein resides in the nucleus. The protein localises to the cytoplasm. It is found in the endosome. Its subcellular location is the cell membrane. It localises to the sarcolemma. The protein resides in the T-tubule. Is a key player in the control of plasma membrane curvature, and membrane shaping and remodeling. Required in muscle cells for the formation of T-tubules, tubular invaginations of the plasma membrane that function in depolarization-contraction coupling. Required in muscle cells for the formation of T-tubules, tubular invaginations of the plasma membrane that function in depolarization-contraction coupling. Is a negative regulator of endocytosis. Is also involved in the regulation of intracellular vesicles sorting, modulation of BACE1 trafficking and the control of amyloid-beta production. In neuronal circuits, endocytosis regulation may influence the internalization of PHF-tau aggregates. May be involved in the regulation of MYC activity and the control cell proliferation. In Rattus norvegicus (Rat), this protein is Myc box-dependent-interacting protein 1 (Bin1).